The sequence spans 991 residues: Adhesion G-protein coupled receptor F3 (991 aa).

An N-terminal signal peptide occupies residues 1–20 (MSSLALSQLLLAVTLPLLEL). Residues 21–694 (EPTFVPTAQS…ENPTLDLLSQ (674 aa)) lie on the Extracellular side of the membrane. Asparagine 75, asparagine 102, asparagine 118, asparagine 321, asparagine 362, asparagine 484, asparagine 571, asparagine 589, asparagine 630, and asparagine 660 each carry an N-linked (GlcNAc...) asparagine glycan. One can recognise a GAIN-B domain in the interval 519–684 (HPFSFSSANV…SILMSQHTVP (166 aa)). Intrachain disulfides connect cysteine 635–cysteine 666 and cysteine 654–cysteine 668. Residues 635-684 (CVFWDHRVFQGQGGWSDEGCEVHAANASITQCICQHLTAFSILMSQHTVP) form a GPS region. The chain crosses the membrane as a helical span at residues 695-715 (VGTGASVLALLVCLAIYGLVW). The Cytoplasmic portion of the chain corresponds to 716–730 (RVVVRNKVAFFRHTT). The chain crosses the membrane as a helical span at residues 731–751 (LFNMVICLLVADTCFLGSPFL). The Extracellular segment spans residues 752–757 (PSGYHS). The chain crosses the membrane as a helical span at residues 758-778 (LICLVTAFLCHFFYLATFFWM). Topologically, residues 779–799 (LAQALVLAHQLLFVFHQLSKH) are cytoplasmic. A helical membrane pass occupies residues 800-820 (VVLSLMVMLGYLCPLGFAGVT). Over 821 to 850 (LGLYLPQRKYLWEGKCFLNGGGVMLYSFSE) the chain is Extracellular. A helical membrane pass occupies residues 851–871 (PVLAIVGVNGLVLVIAVLKLL). The Cytoplasmic segment spans residues 872–892 (RPSLSEGPTVEKRQALVGVLK). A helical membrane pass occupies residues 893-913 (ALLILTPIFGLTWGLGVATLF). The Extracellular portion of the chain corresponds to 914–916 (DGS). A helical transmembrane segment spans residues 917–937 (IVSHYAFSILNSLQGVFILVF). Over 938–991 (GCLTDKKVLEALRKRLRGSRSSNSAISMVTNETYTSEHSKERSEPASYEERMTD) the chain is Cytoplasmic. Residues 964 to 991 (SMVTNETYTSEHSKERSEPASYEERMTD) form a disordered region. Residues 972–991 (TSEHSKERSEPASYEERMTD) show a composition bias toward basic and acidic residues.

Belongs to the G-protein coupled receptor 2 family. Adhesion G-protein coupled receptor (ADGR) subfamily. In terms of assembly, heterodimer of 2 chains generated by proteolytic processing; the large extracellular N-terminal fragment and the membrane-bound C-terminal fragment predominantly remain associated and non-covalently linked. Autoproteolytically processed at the GPS region of the GAIN-B domain; this cleavage modulates receptor activity. In terms of tissue distribution, expression is restricted to testis and circumvallate papillae.

The protein localises to the membrane. Its function is as follows. Orphan receptor. The polypeptide is Adhesion G-protein coupled receptor F3 (ADGRF3) (Mus musculus (Mouse)).